Consider the following 471-residue polypeptide: MGSDFSTVKIRKVTSCSICKAMMSHPVSINCGHSYCKSCIQSYYCNVSPKTGWKMLGCPLCSSPFSLENLRPNKELETIIDMIKGMEEQDQDMVCEEHEEKFNRFCEDDGQLLCWRCYWEDRHKGHTLAHVKDVYQNYKEKLQNTMTKLRELQENHEVQIHFITHQINAWKDAVEDRRQTIKSNFKNLQSFLQEEEKFYLWRLENEEKEMLVQLEGSEANLQQTFERAQCQIQELEAKCQGSAQKLLQDVKNTLSRCEAMKRNPLKADPLKVHTKCNVSELYFDVKTILRRHQVSVILDPSTAHLDLALTKGGRLVTYKRCPRDLQARSSAKRFYGLPCVLGCEGFTSGRYYFEVSVENATSWDLGVCVENVHRGFNMKKEPESGFWTIKMSEEDGLEALTSTPTPPLHLIEKPQILGVFLDYEAGAVSFYSVTTGSHIFTFPKASFQDTLRPFFQVYQYSPLFLPAINNQ.

The RING-type zinc-finger motif lies at 16–62; the sequence is CSICKAMMSHPVSINCGHSYCKSCIQSYYCNVSPKTGWKMLGCPLCS. The B box-type zinc-finger motif lies at 90–131; sequence DQDMVCEEHEEKFNRFCEDDGQLLCWRCYWEDRHKGHTLAHV. 4 residues coordinate Zn(2+): Cys-95, His-98, Cys-117, and His-123. The B30.2/SPRY domain maps to 276–471; the sequence is CNVSELYFDV…PLFLPAINNQ (196 aa).

In terms of assembly, interacts (via B30.2/SPRY domain) with TAB2 and TAB3.

The protein resides in the cytoplasm. It carries out the reaction S-ubiquitinyl-[E2 ubiquitin-conjugating enzyme]-L-cysteine + [acceptor protein]-L-lysine = [E2 ubiquitin-conjugating enzyme]-L-cysteine + N(6)-ubiquitinyl-[acceptor protein]-L-lysine.. It functions in the pathway protein modification; protein ubiquitination. Its pathway is protein modification; protein sumoylation. Functionally, E3 ubiquitin-protein and E3 SUMO-protein ligase that acts as a regulator of innate immunity. Acts as a negative regulator of type I interferon IFN-beta production by catalyzing 'Lys-48'-linked polyubiquitination of AZI2/NAP1, leading to its degradation. Mediates 'Lys-48'-linked polyubiquitination and proteasomal degradation of the critical TLR adapter TICAM1, inhibiting TLR3-mediated type I interferon signaling. Acts as a positive regulator of the cGAS-STING pathway by acting as a E3 SUMO-protein ligase: mediates sumoylation of CGAS and STING, preventing their degradation and thereby activating the innate immune response to DNA virus. Also acts as a negative regulator of NF-kappa-B signaling independently of its E3 protein ligase activity by promoting lysosome-dependent degradation of TAB2 and TAB3 adapters. The polypeptide is E3 ubiquitin-protein ligase TRIM38 (Mus musculus (Mouse)).